The chain runs to 392 residues: F-box only protein 5-A (392 aa).

A disordered region spans residues 1–21; the sequence is MMCGFASNQSPKKLSSKKSSA. The span at 7 to 20 shows a compositional bias: low complexity; that stretch reads SNQSPKKLSSKKSS. In terms of domain architecture, F-box spans 197–244; the sequence is AELFHRDFKHLLTKILRHLSAMDLINVISVSTTWRKLLQKDNWAYNAY. The ZBR-type zinc finger occupies 319-367; that stretch reads SLKVCVDCGSPAKHDPCLHRAICTRESCKLDFCTRCSCKYHFSKSCLMS. Positions 323, 326, 341, 346, 351, 354, 359, and 364 each coordinate Zn(2+).

Part of a SCF (SKP1-cullin-F-box) protein ligase complex. Interacts with btrc. Interacts with skp1. Interacts with cdc20. Interacts with pin1; stabilizes fbxo5 by preventing its association with btrc in an isomerization-dependent pathway; this interaction is present during G2 phase and prevents fbxo5 degradation. Interacts with plk1. Proteolysed; proteolysis is induced by both cyclin B-cdk1 and cyclin A-cdk1/2 complex through probable phosphorylation. Proteolysis is inhibited by pin1 during G2.

The protein resides in the nucleus. Its subcellular location is the cytoplasm. It localises to the cytoskeleton. It is found in the spindle. The protein localises to the microtubule organizing center. The protein resides in the centrosome. The protein operates within protein modification; protein ubiquitination. In terms of biological role, regulates progression through early mitosis by inhibiting the anaphase promoting complex/cyclosome (APC). Binds to the APC activator cdc20 to prevent APC activation. Can also bind directly to the APC to inhibit substrate-binding. Required to arrest unfertilized eggs at metaphase of meiosis II, by preventing their release from metaphase of meiosis II, through inhibition of APC-dependent cyclin B destruction leading to stabilization of cyclin B-cdk1 complex activity. The protein is F-box only protein 5-A (fbxo5-a) of Xenopus laevis (African clawed frog).